The chain runs to 477 residues: UTP--glucose-1-phosphate uridylyltransferase (477 aa).

N-acetylalanine is present on A2. UTP is bound by residues 92–95 (LNGG), K106, Q169, and G198. 94–95 (GG) is a substrate binding site. Residues H199 and 227 to 229 (NSD) contribute to the substrate site. Positions 229 and 367 each coordinate UTP.

This sequence belongs to the UDPGP type 1 family. In terms of assembly, monomer. It depends on Mg(2+) as a cofactor.

The protein resides in the cytoplasm. It carries out the reaction alpha-D-glucose 1-phosphate + UTP + H(+) = UDP-alpha-D-glucose + diphosphate. Its activity is regulated as follows. Inhibition by uncomplexed, free UTP. Functionally, plays a central role as a glucosyl donor in cellular metabolic pathways. In Solanum tuberosum (Potato), this protein is UTP--glucose-1-phosphate uridylyltransferase.